A 784-amino-acid polypeptide reads, in one-letter code: Toll-like receptor 2 (784 aa).

Positions 1-20 are cleaved as a signal peptide; the sequence is MPRALWTAWVWAVIILSMEG. The Extracellular segment spans residues 21–587; that stretch reads ASHQASSLSC…ARLSLSECHR (567 aa). A disulfide bridge connects residues Cys30 and Cys36. LRR repeat units follow at residues 54 to 77, 78 to 101, 102 to 125, 126 to 150, 151 to 175, 176 to 199, 200 to 223, 224 to 250, 251 to 278, 279 to 308, 309 to 337, 338 to 361, 362 to 388, 389 to 414, 415 to 437, 438 to 457, 458 to 478, 479 to 500, and 501 to 524; these read VKSL…RCVN, LKTL…HLRN, LEYL…SLYA, LKFL…HLPN, LRTL…GLIF, LEEL…SIQN, ISHL…IVSS, LDCL…MNTS, VKKL…YVSG, ILEV…HLGN, VETL…LTGK, VKRV…HLKS, LEYL…AWPF, LQTL…TLEN, LNNL…WPGK, MKQL…CLPQ, TLEI…ILPQ, LKEL…FLPV, and LSVM…SFQQ. Asn114 is a glycosylation site (N-linked (GlcNAc...) asparagine). Asn199 carries N-linked (GlcNAc...) asparagine glycosylation. Asn248 carries an N-linked (GlcNAc...) asparagine glycan. Cys353 and Cys382 form a disulfide bridge. The cysteines at positions 432 and 454 are disulfide-linked. A glycan (N-linked (GlcNAc...) asparagine) is linked at Asn442. An LRRCT domain is found at 525 to 579; sequence LKTLEAGGNNFICSCDFLSFTQGQQALGRVLVDWPAEYRCDSPSHVRGQRVQDAR. A helical transmembrane segment spans residues 588 to 608; that stretch reads AAVVSAACCALFLLLLLTGVL. The Cytoplasmic segment spans residues 609-784; it reads CHRFHGLWYM…WLNLRAAIRS (176 aa). A TIR domain is found at 639–782; sequence ICYDAFVSYS…GFWLNLRAAI (144 aa). Lys754 participates in a covalent cross-link: Glycyl lysine isopeptide (Lys-Gly) (interchain with G-Cter in ubiquitin). The ATG16L1-binding motif signature appears at 761–778; the sequence is YLEWPVDETQQEGFWLNL.

The protein belongs to the Toll-like receptor family. Interacts with LY96, TLR1 and TLR6 (via extracellular domain). TLR2 seems to exist in heterodimers with either TLR1 or TLR6 before stimulation by the ligand. The heterodimers form bigger oligomers in response to their corresponding ligands as well as further heterotypic associations with other receptors such as CD14 and/or CD36. Binds MYD88 (via TIR domain). Interacts with TICAM1. Interacts with CNPY3. Interacts with ATG16L1. Interacts with PPP1R11. Interacts with TICAM2. Interacts with TIRAP. Post-translationally, ubiquitinated at Lys-754 by PPP1R11, leading to its degradation. Deubiquitinated by USP2. In terms of processing, glycosylation of Asn-442 is critical for secretion of the N-terminal ectodomain of TLR2.

It localises to the membrane. The protein resides in the cytoplasmic vesicle. It is found in the phagosome membrane. Its subcellular location is the membrane raft. Its function is as follows. Cooperates with LY96 to mediate the innate immune response to bacterial lipoproteins and other microbial cell wall components. Cooperates with TLR1 or TLR6 to mediate the innate immune response to bacterial lipoproteins or lipopeptides. Acts via MYD88 and TRAF6, leading to NF-kappa-B activation, cytokine secretion and the inflammatory response. May also promote apoptosis in response to lipoproteins. Forms activation clusters composed of several receptors depending on the ligand, these clusters trigger signaling from the cell surface and subsequently are targeted to the Golgi in a lipid-raft dependent pathway. Forms the cluster TLR2:TLR6:CD14:CD36 in response to diacylated lipopeptides and TLR2:TLR1:CD14 in response to triacylated lipopeptides. The sequence is that of Toll-like receptor 2 (TLR2) from Bubalus bubalis (Domestic water buffalo).